A 148-amino-acid chain; its full sequence is Receptor activity-modifying protein 1 (148 aa).

Positions 1–26 (MAPGLRGLPRRGLWLLLAHHLFMVTA) are cleaved as a signal peptide. 3 disulfide bridges follow: Cys27/Cys82, Cys40/Cys72, and Cys57/Cys104. The Extracellular segment spans residues 27–118 (CRDPDYGTLI…RALRDPPNSI (92 aa)). Residues 119-140 (LCPFIVLPITVTLLMTALVVWR) traverse the membrane as a helical segment. Over 141 to 148 (SKRTEGIV) the chain is Cytoplasmic.

This sequence belongs to the RAMP family. As to quaternary structure, heterodimer of CALCRL and RAMP1; the interaction induces allosteric modulation of CALCRL function and CGRP1/CALCA and CGRP2/CALCB ligand specificity. Heterodimer of CALCR and RAMP1; interaction forms the AMYR1 receptor complex for amylin/IAPP and CGRP1/CALCA ligands.

The protein localises to the cell membrane. Functionally, accessory protein that interacts with and modulates the function of G-protein coupled receptors including calcitonin gene-related peptide type 1 receptor (CALCRL) and calcitonin receptor (CALCR). Required for the transport of CALCRL to the plasma membrane. Together with CALCRL, form the receptor complex for the calcitonin gene-related peptides CGRP1/CALCA and CGRP2/CALCB. Together with CALCR, form the AMYR1 receptor complex for amylin/IAPP and CGRP1/CALCA. This is Receptor activity-modifying protein 1 from Rattus norvegicus (Rat).